The following is a 273-amino-acid chain: Testis-specific serine/threonine-protein kinase 6 (273 aa).

In terms of domain architecture, Protein kinase spans 12–267 (YKLGRTIGEG…AGQVARNCWL (256 aa)). Residues 18–26 (IGEGSYSKV) and Lys41 each bind ATP. Asp135 serves as the catalytic Proton acceptor.

This sequence belongs to the protein kinase superfamily. CAMK Ser/Thr protein kinase family. As to quaternary structure, microtubule inner protein component of sperm flagellar doublet microtubules. Interacts with HSP90; this interaction stabilizes and activates TSSK6. Interacts with the heat shock proteins HSPCB, HSPA8 and HSPA1A. These interactions appear to be required for TSSK6 kinase activity. Interacts with TSACC; this interaction is direct and recruits TSACC to HSP90, which is essential for kinase activity. The cofactor is Mg(2+). Post-translationally, autophosphorylated. In terms of processing, ubiquitinated; HSP90 activity negatively regulates ubiquitination and degradation. As to expression, highly expressed in testis. Expressed at lower levels in colon, small intestine, ovary, prostate, thymus, spleen and peripheral blood leukocytes.

The protein localises to the cytoplasm. The protein resides in the cytoskeleton. It is found in the flagellum axoneme. Its subcellular location is the nucleus. It carries out the reaction L-seryl-[protein] + ATP = O-phospho-L-seryl-[protein] + ADP + H(+). It catalyses the reaction L-threonyl-[protein] + ATP = O-phospho-L-threonyl-[protein] + ADP + H(+). Functionally, serine/threonine-protein kinase component of the sperm flagellar doublet microtubules. May act as a regulator of sperm motility by mediating phosphorylation of sperm doublet microtubule proteins. Plays a role in DNA condensation during postmeiotic chromatin remodeling and histone-to-protamine transition during spermatogenesis. The sequence is that of Testis-specific serine/threonine-protein kinase 6 from Homo sapiens (Human).